The following is a 244-amino-acid chain: Methylthioribulose-1-phosphate dehydratase (244 aa).

Cysteine 89 is a binding site for substrate. Zn(2+) is bound by residues histidine 107 and histidine 109. Glutamate 130 functions as the Proton donor/acceptor in the catalytic mechanism. Residue histidine 192 coordinates Zn(2+).

The protein belongs to the aldolase class II family. MtnB subfamily. It depends on Zn(2+) as a cofactor.

Its subcellular location is the cytoplasm. The enzyme catalyses 5-(methylsulfanyl)-D-ribulose 1-phosphate = 5-methylsulfanyl-2,3-dioxopentyl phosphate + H2O. Its pathway is amino-acid biosynthesis; L-methionine biosynthesis via salvage pathway; L-methionine from S-methyl-5-thio-alpha-D-ribose 1-phosphate: step 2/6. Functionally, catalyzes the dehydration of methylthioribulose-1-phosphate (MTRu-1-P) into 2,3-diketo-5-methylthiopentyl-1-phosphate (DK-MTP-1-P). The polypeptide is Methylthioribulose-1-phosphate dehydratase (Saccharomyces cerevisiae (strain ATCC 204508 / S288c) (Baker's yeast)).